Consider the following 448-residue polypeptide: DNA primase DnaG (448 aa).

The region spanning 186–260 (DSIIVVEGRN…EADFVARAPP (75 aa)) is the Toprim domain. Residues Glu192, Asp234, and Asp236 each coordinate Mg(2+). The interval 318 to 340 (AEVIEEPPEQPPKNEEIREEQSQ) is disordered. The span at 329–338 (PKNEEIREEQ) shows a compositional bias: basic and acidic residues.

Belongs to the archaeal DnaG primase family. As to quaternary structure, forms a ternary complex with MCM helicase and DNA. Component of the archaeal exosome complex. Mg(2+) serves as cofactor.

The catalysed reaction is ssDNA + n NTP = ssDNA/pppN(pN)n-1 hybrid + (n-1) diphosphate.. Functionally, RNA polymerase that catalyzes the synthesis of short RNA molecules used as primers for DNA polymerase during DNA replication. Also part of the exosome, which is a complex involved in RNA degradation. Acts as a poly(A)-binding protein that enhances the interaction between heteromeric, adenine-rich transcripts and the exosome. The chain is DNA primase DnaG from Thermoplasma acidophilum (strain ATCC 25905 / DSM 1728 / JCM 9062 / NBRC 15155 / AMRC-C165).